The sequence spans 208 residues: uncharacterized protein (208 aa).

This is an uncharacterized protein from Synechococcus elongatus (strain ATCC 33912 / PCC 7942 / FACHB-805) (Anacystis nidulans R2).